Reading from the N-terminus, the 228-residue chain is Ornithine decarboxylase antizyme 1 (228 aa).

Residues 17 to 55 (REKEGDKPSATIHASRTMPLLSLHSRGGSSSESSRVSLH) form a disordered region. The segment covering 36–55 (LLSLHSRGGSSSESSRVSLH) has biased composition (low complexity).

This sequence belongs to the ODC antizyme family. In terms of assembly, interacts with ODC1 and thereby sterically blocks ODC homodimerization. Forms a ternary complex with PSMB4 and OAZ1 before PSMB4 is incorporated into the 20S proteasome. Interacts with AZIN2; this interaction disrupts the interaction between the antizyme and ODC1. Interacts with FAM171A1.

In terms of biological role, ornithine decarboxylase (ODC) antizyme protein that negatively regulates ODC activity and intracellular polyamine biosynthesis and uptake in response to increased intracellular polyamine levels. Binds to ODC monomers, inhibiting the assembly of the functional ODC homodimer, and targets the monomers for ubiquitin-independent proteolytic destruction by the 26S proteasome. Triggers ODC degradation by inducing the exposure of a cryptic proteasome-interacting surface of ODC. Stabilizes AZIN2 by interfering with its ubiquitination. Also inhibits cellular uptake of polyamines by inactivating the polyamine uptake transporter. SMAD1/OAZ1/PSMB4 complex mediates the degradation of the CREBBP/EP300 repressor SNIP1. Involved in the translocation of AZIN2 from ER-Golgi intermediate compartment (ERGIC) to the cytosol. This Homo sapiens (Human) protein is Ornithine decarboxylase antizyme 1 (OAZ1).